The primary structure comprises 459 residues: Zinc finger protein ZPR1 (459 aa).

Low complexity predominate over residues 1–29 (MSAGGAVEPGLPAAAAAPSAAPARDPGPG). Positions 1-43 (MSAGGAVEPGLPAAAAAPSAAPARDPGPGHLFRPISAEDEEQQ) are disordered. 2 C4-type zinc fingers span residues 51 to 83 (CMNC…CEHC) and 259 to 291 (CPEC…CENC). The segment at 438–459 (NEELGLNDMKTEGYETGLPAQR) is disordered.

Belongs to the ZPR1 family. Component of an import snRNP complex composed of KPNB1, SNUPN, SMN1 and ZNF259. Interacts (via C-terminal region) with SMN1 (via C-terminal region); the interaction occurs after treatment with serum. Interacts with elongation factor 1-alpha EEF1A1; the interaction occurs in a epidermal growth factor (EGF)-dependent manner. Interacts (via zinc fingers) with EGFR (via C-terminal cytoplasmic kinase domain); the interaction is negatively regulated in response to epidermal growth factor (EGF) stimulation and EGFR kinase activity. May also bind to the PDGFR receptor.

It is found in the nucleus. The protein resides in the cytoplasm. It localises to the nucleolus. The protein localises to the perinuclear region. Its subcellular location is the gem. It is found in the cajal body. The protein resides in the cell projection. It localises to the axon. The protein localises to the growth cone. Its function is as follows. Acts as a signaling molecule that communicates proliferative growth signals from the cytoplasm to the nucleus. Plays a role for the localization and accumulation of the survival motor neuron protein SMN1 in sub-nuclear bodies, including gems and Cajal bodies. Induces neuron differentiation and stimulates axonal growth and formation of growth cone in spinal cord motor neurons. Plays a role in the splicing of cellular pre-mRNAs. May be involved in H(2)O(2)-induced neuronal cell death. This is Zinc finger protein ZPR1 (ZNF259) from Bos taurus (Bovine).